Here is a 533-residue protein sequence, read N- to C-terminus: Dipeptide-binding protein (533 aa).

The signal sequence occupies residues 1 to 24 (MRKILPLRAWLAAGLILGSPFSHA).

It belongs to the bacterial solute-binding protein 5 family.

The protein resides in the periplasm. Binds different dipeptides. Probably bind only L-amino acid containing dipeptides. In Pseudomonas aeruginosa (strain ATCC 15692 / DSM 22644 / CIP 104116 / JCM 14847 / LMG 12228 / 1C / PRS 101 / PAO1), this protein is Dipeptide-binding protein.